The sequence spans 98 residues: uncharacterized protein (98 aa).

Residues 1-63 are disordered; sequence MPRDKKLVHR…NGHSQPAIVA (63 aa). Residues 14-29 show a composition bias toward acidic residues; sequence DVEDEDNDQREEEWSD. Positions 48-57 are enriched in polar residues; sequence EPSSASNGHS.

This is an uncharacterized protein from Aedes vexans (Inland floodwater mosquito).